The following is a 430-amino-acid chain: Putative O-antigen transporter (430 aa).

The next 12 helical transmembrane spans lie at 23–39 (IIIAGVQLASISYLISM), 45–61 (YAIFSLLTGLLVWCSAV), 96–112 (IAIIFFIALFYIFSGVI), 131–147 (LFFTSCLVFSSIGIGAI), 163–179 (LLNALSYMIGMLGLLYI), 192–208 (LIVLYLPVGMISLCYIV), 236–252 (LFTLLSIVVLQTDYMVI), 266–282 (VTMKIFGLVFFIYTAIL), 309–325 (ILLGSLYVVGCTIFIYL), 342–358 (VSILSFMLIGIYFCIRV), 373–389 (LKILWILVPLQAIIGGI), and 400–416 (ISGVLLGLIISFALTVF).

It localises to the cell inner membrane. The protein operates within bacterial outer membrane biogenesis; LPS O-antigen biosynthesis. May be involved in the translocation process of the nascent O-polysaccharide molecules and/or its ligation to lipid A core units. The sequence is that of Putative O-antigen transporter (rfbX) from Salmonella typhimurium (strain LT2 / SGSC1412 / ATCC 700720).